Consider the following 1844-residue polypeptide: Non-structural replication polyprotein (1844 aa).

The 162-residue stretch at 58 to 219 (SGLGTSHHPH…NQPSDAHSWL (162 aa)) folds into the Alphavirus-like MT domain. A disordered region spans residues 571–739 (TAFLPFTPTT…QLLPAPLTND (169 aa)). Low complexity-rich tracts occupy residues 609–621 (SSPG…TTAA) and 726–736 (LPSSQLLPAPL). The OTU domain maps to 728–879 (SSQLLPAPLT…FSPGKRLLGS (152 aa)). In terms of domain architecture, Peptidase C21 spans 730-884 (QLLPAPLTND…RLLGSQPSAK (155 aa)). C783 (for protease activity) is an active-site residue. The interval 859–887 (DITHTTGPPSHFSPGKRLLGSQPSAKGHP) is disordered. Residues 865–867 (GPP) carry the GPP flap motif. The active-site For protease activity is the H869. The region spanning 946–1103 (TGPTPKERII…RLLPYIDMYC (158 aa)) is the (+)RNA virus helicase ATP-binding domain. ATP is bound at residue 976–983 (GFAGCGKT). The region spanning 1104–1236 (WWSYRIPQCI…SLIIMDRYFP (133 aa)) is the (+)RNA virus helicase C-terminal domain. In terms of domain architecture, RdRp catalytic spans 1572–1678 (TPKIANDYTA…DHPLPTRHDW (107 aa)).

This sequence belongs to the Tymoviridae non-structural replication polyprotein family. As to quaternary structure, interacts with host ubiquitin. Post-translationally, specific enzymatic cleavages by the host yield mature proteins.

The protein resides in the host chloroplast envelope. It carries out the reaction Thiol-dependent hydrolysis of ester, thioester, amide, peptide and isopeptide bonds formed by the C-terminal Gly of ubiquitin (a 76-residue protein attached to proteins as an intracellular targeting signal).. It catalyses the reaction RNA(n) + a ribonucleoside 5'-triphosphate = RNA(n+1) + diphosphate. Acts as a cysteine protease, methyltransferase and deubiquitinase. The cysteine protease activity cleaves the polyprotein giving rise to mature proteins. The protease has the ability to process substrates in trans. The methyltransferase domain is probably involved in viral RNA capping. The deubiquitylating activity counteracts the degradation of the viral polymerase mediated by the host ubiquitin-proteasome system. The polymerase is thus stabilized and infectivity is increased. Favors K63 poly-Ub linkage. Its function is as follows. RNA-directed RNA polymerase is responsible for the replication and transcription of the genome. The chain is Non-structural replication polyprotein from Turnip yellow mosaic virus.